A 414-amino-acid polypeptide reads, in one-letter code: tRNA N6-adenosine threonylcarbamoyltransferase, mitochondrial (414 aa).

A mitochondrion-targeting transit peptide spans 1 to 29 (MLMLSKTAGAIPRPPRSNVRGFIRRFNVQ). Lysine 74 and lysine 140 each carry N6-acetyllysine. 2 residues coordinate a divalent metal cation: histidine 147 and histidine 151. Substrate contacts are provided by residues 169–173 (LISGG) and aspartate 202. Residue lysine 203 is modified to N6-acetyllysine. Substrate-binding residues include glycine 222 and glutamate 226. N6-acetyllysine is present on residues lysine 230 and lysine 299. Residues 329-330 (SN) and threonine 357 contribute to the substrate site. An a divalent metal cation-binding site is contributed by aspartate 358.

The protein belongs to the KAE1 / TsaD family. Monomer. Requires a divalent metal cation as cofactor.

It is found in the mitochondrion. It catalyses the reaction L-threonylcarbamoyladenylate + adenosine(37) in tRNA = N(6)-L-threonylcarbamoyladenosine(37) in tRNA + AMP + H(+). Required for the formation of a threonylcarbamoyl group on adenosine at position 37 (t(6)A37) in mitochondrial tRNAs that read codons beginning with adenine. Probably involved in the transfer of the threonylcarbamoyl moiety of threonylcarbamoyl-AMP (TC-AMP) to the N6 group of A37. Involved in mitochondrial genome maintenance. In Rattus norvegicus (Rat), this protein is tRNA N6-adenosine threonylcarbamoyltransferase, mitochondrial.